The sequence spans 169 residues: Short form salivary protein D7R3 (169 aa).

A signal peptide spans 1–21 (MFGKLLPCAILVWCLFSLGQA). Disulfide bonds link C30/C62, C43/C168, and C101/C120. The noradrenaline site is built by E31 and R46. E31 provides a ligand contact to serotonin. Residues H59, Y118, D135, and E138 each coordinate serotonin. Histamine contacts are provided by Y118, D135, and E138. Noradrenaline is bound by residues D135 and E138.

Belongs to the PBP/GOBP family. Female saliva (at protein level). Female salivary gland. Low-level expression in female carcass without salivary glands. Not detected in male tissues.

It localises to the secreted. Its function is as follows. Modulates blood feeding of female mosquitoes on vertebrate species by binding and sequestering different mediators involved in the host response. Binds serotonin, noradrenaline, histamine and adrenaline. Inhibits histamine-, serotonin- and noradrenaline-induced smooth muscle contraction. Exhibits vasodilating activity. The chain is Short form salivary protein D7R3 from Anopheles gambiae (African malaria mosquito).